We begin with the raw amino-acid sequence, 117 residues long: Large ribosomal subunit protein uL22 (117 aa).

The protein belongs to the universal ribosomal protein uL22 family. As to quaternary structure, part of the 50S ribosomal subunit.

Functionally, this protein binds specifically to 23S rRNA; its binding is stimulated by other ribosomal proteins, e.g. L4, L17, and L20. It is important during the early stages of 50S assembly. It makes multiple contacts with different domains of the 23S rRNA in the assembled 50S subunit and ribosome. In terms of biological role, the globular domain of the protein is located near the polypeptide exit tunnel on the outside of the subunit, while an extended beta-hairpin is found that lines the wall of the exit tunnel in the center of the 70S ribosome. The protein is Large ribosomal subunit protein uL22 of Lactobacillus delbrueckii subsp. bulgaricus (strain ATCC 11842 / DSM 20081 / BCRC 10696 / JCM 1002 / NBRC 13953 / NCIMB 11778 / NCTC 12712 / WDCM 00102 / Lb 14).